We begin with the raw amino-acid sequence, 380 residues long: Protein COS12 (380 aa).

Topologically, residues 1 to 70 (MDGAKFENTV…WKIRGKRHYL (70 aa)) are cytoplasmic. The helical transmembrane segment at 71–91 (VIVTALMFEVLYFLWTYSYIF) threads the bilayer. Residues 92 to 231 (RERTLGKQVS…KLLWAFKEVT (140 aa)) are Extracellular-facing. A helical transmembrane segment spans residues 232–252 (IMNSRFAFFSIAYLNGLLTIP). The Cytoplasmic segment spans residues 253–257 (RLRNS). Residues 258–278 (LHILYVCAVLSSMIIEYLIGI) form a helical membrane-spanning segment. Residues 279-380 (DKFRFKSMNL…KEAQSACNDV (102 aa)) are Extracellular-facing.

Belongs to the DUP/COS family.

Its subcellular location is the membrane. The polypeptide is Protein COS12 (COS12) (Saccharomyces cerevisiae (strain ATCC 204508 / S288c) (Baker's yeast)).